We begin with the raw amino-acid sequence, 275 residues long: MVRDDLRCRAGNETHWDPTAYMQFARLRQRPVVELLDHVDLYSPERIYDLGCGTGIATELLARRWPQAELHGVDSSAEMLEEAARLPIRASWERANLQHWCAERPASLLFAAAVLHFIERHCSLLPRLLGQLSPGGCLAAHMPNWRDASWYRLMLDALDSAGPGGTPLGSPTLRYLMQQRNVLSLDNYYRLLAPLCAEVDIWETEHLQVVDGNDPIFDWVKVSALRPVLGELDEEARRRFLDRYLDLLHRYYPQELDGRTLFPFRRVFVVASLRR.

Belongs to the methyltransferase superfamily. Tam family.

The protein localises to the cytoplasm. It catalyses the reaction trans-aconitate + S-adenosyl-L-methionine = (E)-3-(methoxycarbonyl)pent-2-enedioate + S-adenosyl-L-homocysteine. Catalyzes the S-adenosylmethionine monomethyl esterification of trans-aconitate. The polypeptide is Trans-aconitate 2-methyltransferase (Pseudomonas paraeruginosa (strain DSM 24068 / PA7) (Pseudomonas aeruginosa (strain PA7))).